Here is a 223-residue protein sequence, read N- to C-terminus: MKFAVLVFPGSNCDRDMFNAAIKSGVEAEYVDYRETSLSGFDGVLIPGGFSFGDYLRSGAMASVAPIISEVKRLAAEGKPVLGVCNGFQILTEIGLLPGALLHNDSHLFISRNEELEIVNNHTAFTNLYEQGEKVIYPVAHGEGHYYCTDEIYQQLKANNQIILKYVNNPNGSYDDIAGIVNEKGNVCGMMPHPERALETLLGTDSGVKLFEAMVKSWREQHV.

The Glutamine amidotransferase type-1 domain maps to 3 to 223 (FAVLVFPGSN…MVKSWREQHV (221 aa)). Catalysis depends on Cys-85, which acts as the Nucleophile. Catalysis depends on residues His-193 and Glu-195.

As to quaternary structure, part of the FGAM synthase complex composed of 1 PurL, 1 PurQ and 2 PurS subunits.

The protein resides in the cytoplasm. It catalyses the reaction N(2)-formyl-N(1)-(5-phospho-beta-D-ribosyl)glycinamide + L-glutamine + ATP + H2O = 2-formamido-N(1)-(5-O-phospho-beta-D-ribosyl)acetamidine + L-glutamate + ADP + phosphate + H(+). The catalysed reaction is L-glutamine + H2O = L-glutamate + NH4(+). Its pathway is purine metabolism; IMP biosynthesis via de novo pathway; 5-amino-1-(5-phospho-D-ribosyl)imidazole from N(2)-formyl-N(1)-(5-phospho-D-ribosyl)glycinamide: step 1/2. In terms of biological role, part of the phosphoribosylformylglycinamidine synthase complex involved in the purines biosynthetic pathway. Catalyzes the ATP-dependent conversion of formylglycinamide ribonucleotide (FGAR) and glutamine to yield formylglycinamidine ribonucleotide (FGAM) and glutamate. The FGAM synthase complex is composed of three subunits. PurQ produces an ammonia molecule by converting glutamine to glutamate. PurL transfers the ammonia molecule to FGAR to form FGAM in an ATP-dependent manner. PurS interacts with PurQ and PurL and is thought to assist in the transfer of the ammonia molecule from PurQ to PurL. The chain is Phosphoribosylformylglycinamidine synthase subunit PurQ from Staphylococcus aureus (strain bovine RF122 / ET3-1).